A 344-amino-acid polypeptide reads, in one-letter code: MVKVGIFGATGYTGVELIRILSKHEKVEIKYLSSQSYNTKAISDVYSSLIGFCDKVLEEVDFQKAMSECDVIFTALPSGHASKIAREAVKKGVKVIDLGADFRFDDYSVYKEWYSGDYEDYGDIKRVYGIPEIYRDDIKEAQVVGNPGCYPTSVILGLMPLLKNGIIEGNIIVDSKSGVSGAGHNPSYNNMYAECNENIKAYNVAKHRHIPEMEQELSKIFGEKVSVVFTPHLAPMTRGILSTMYCKLKKDMDVNTVYNIYTDFYKNEYFVKVLKPGNYPATKNVYGSNFCHIGFEVDKHTNTLIVMSAIDNLVKGASGQAVQNMNIMFGIEENTALDIVPIYP.

Cysteine 149 is an active-site residue.

Belongs to the NAGSA dehydrogenase family. Type 1 subfamily.

The protein localises to the cytoplasm. The enzyme catalyses N-acetyl-L-glutamate 5-semialdehyde + phosphate + NADP(+) = N-acetyl-L-glutamyl 5-phosphate + NADPH + H(+). Its pathway is amino-acid biosynthesis; L-arginine biosynthesis; N(2)-acetyl-L-ornithine from L-glutamate: step 3/4. In terms of biological role, catalyzes the NADPH-dependent reduction of N-acetyl-5-glutamyl phosphate to yield N-acetyl-L-glutamate 5-semialdehyde. The sequence is that of N-acetyl-gamma-glutamyl-phosphate reductase from Thermoanaerobacter pseudethanolicus (strain ATCC 33223 / 39E) (Clostridium thermohydrosulfuricum).